Consider the following 375-residue polypeptide: Biotin synthase, mitochondrial (375 aa).

The transit peptide at 1–16 (MMSTIYRHLSTARPAL) directs the protein to the mitochondrion. The Radical SAM core domain occupies 81–310 (HDPTKVQLCT…IATARIVMPK (230 aa)). Cys-99, Cys-103, and Cys-106 together coordinate [4Fe-4S] cluster. Positions 143, 176, 236, and 314 each coordinate [2Fe-2S] cluster.

The protein belongs to the radical SAM superfamily. Biotin synthase family. [4Fe-4S] cluster serves as cofactor. [2Fe-2S] cluster is required as a cofactor.

It localises to the mitochondrion. The catalysed reaction is (4R,5S)-dethiobiotin + (sulfur carrier)-SH + 2 reduced [2Fe-2S]-[ferredoxin] + 2 S-adenosyl-L-methionine = (sulfur carrier)-H + biotin + 2 5'-deoxyadenosine + 2 L-methionine + 2 oxidized [2Fe-2S]-[ferredoxin]. It functions in the pathway cofactor biosynthesis; biotin biosynthesis; biotin from 7,8-diaminononanoate: step 2/2. In Saccharomyces cerevisiae (strain ATCC 204508 / S288c) (Baker's yeast), this protein is Biotin synthase, mitochondrial (BIO2).